The following is a 371-amino-acid chain: 4-hydroxy-3-methylbut-2-en-1-yl diphosphate synthase (flavodoxin) (371 aa).

The [4Fe-4S] cluster site is built by Cys-272, Cys-275, Cys-307, and Glu-314.

This sequence belongs to the IspG family. It depends on [4Fe-4S] cluster as a cofactor.

It carries out the reaction (2E)-4-hydroxy-3-methylbut-2-enyl diphosphate + oxidized [flavodoxin] + H2O + 2 H(+) = 2-C-methyl-D-erythritol 2,4-cyclic diphosphate + reduced [flavodoxin]. It participates in isoprenoid biosynthesis; isopentenyl diphosphate biosynthesis via DXP pathway; isopentenyl diphosphate from 1-deoxy-D-xylulose 5-phosphate: step 5/6. Functionally, converts 2C-methyl-D-erythritol 2,4-cyclodiphosphate (ME-2,4cPP) into 1-hydroxy-2-methyl-2-(E)-butenyl 4-diphosphate. The polypeptide is 4-hydroxy-3-methylbut-2-en-1-yl diphosphate synthase (flavodoxin) (Pseudomonas aeruginosa (strain LESB58)).